The chain runs to 395 residues: NAD(P)H-quinone oxidoreductase subunit H (395 aa).

This sequence belongs to the complex I 49 kDa subunit family. NDH-1 can be composed of about 15 different subunits; different subcomplexes with different compositions have been identified which probably have different functions.

The protein localises to the cellular thylakoid membrane. It carries out the reaction a plastoquinone + NADH + (n+1) H(+)(in) = a plastoquinol + NAD(+) + n H(+)(out). The enzyme catalyses a plastoquinone + NADPH + (n+1) H(+)(in) = a plastoquinol + NADP(+) + n H(+)(out). Functionally, NDH-1 shuttles electrons from an unknown electron donor, via FMN and iron-sulfur (Fe-S) centers, to quinones in the respiratory and/or the photosynthetic chain. The immediate electron acceptor for the enzyme in this species is believed to be plastoquinone. Couples the redox reaction to proton translocation, and thus conserves the redox energy in a proton gradient. Cyanobacterial NDH-1 also plays a role in inorganic carbon-concentration. The polypeptide is NAD(P)H-quinone oxidoreductase subunit H (Prochlorococcus marinus (strain MIT 9515)).